A 120-amino-acid chain; its full sequence is Myohemerythrin (120 aa).

Fe cation contacts are provided by H26, H56, E60, H75, H79, H108, and D113.

The protein belongs to the hemerythrin family. As to quaternary structure, monomer.

Its subcellular location is the cytoplasm. In terms of biological role, myohemerythrin is an oxygen-binding protein found in the retractor muscles of certain worms. The oxygen-binding site contains two iron atoms. The chain is Myohemerythrin from Theromyzon tessulatum (Duck leech).